A 318-amino-acid chain; its full sequence is 2-keto-3-deoxygluconate permease (318 aa).

10 helical membrane-spanning segments follow: residues 10-30, 42-62, 82-102, 109-129, 139-159, 163-183, 201-221, 224-244, 257-277, and 288-308; these read LPGG…TLWP, GLIS…GATI, IAVA…GGIP, LSVL…YAAL, AGAV…LILG, LATF…LGFA, TLVP…TIVH, ASGV…LLLA, VAAS…AGMA, and TALV…LTAL.

This sequence belongs to the KdgT transporter family.

The protein localises to the cell inner membrane. The enzyme catalyses 2-dehydro-3-deoxy-D-gluconate(in) + H(+)(in) = 2-dehydro-3-deoxy-D-gluconate(out) + H(+)(out). Functionally, catalyzes the proton-dependent uptake of 2-keto-3-deoxygluconate (KDG) into the cell. The sequence is that of 2-keto-3-deoxygluconate permease from Xanthomonas oryzae pv. oryzae (strain MAFF 311018).